The chain runs to 478 residues: Nuclear distribution protein PAC1 (478 aa).

Residues 9–41 (QAEELHKAMIAYLLSANLPKSAAALREELADSV) enclose the LisH domain. Residues 60–87 (TSVVRLQKKIMDLESRNNALQSELDSAT) adopt a coiled-coil conformation. WD repeat units lie at residues 113-154 (SHRE…RTIK), 156-196 (HTKA…KNIR), 200-247 (GHDH…CVKT), 250-289 (GHVD…TKST), 292-352 (GHEH…IKTL), 354-393 (GHDN…KCVR), 398-439 (AHGH…AASA), and 440-477 (INGV…RVFA).

It belongs to the WD repeat LIS1/nudF family. As to quaternary structure, self-associates. Interacts with NDL1 and dynein.

Its subcellular location is the cytoplasm. It is found in the cytoskeleton. The protein localises to the spindle pole. Its function is as follows. Positively regulates the activity of the minus-end directed microtubule motor protein dynein. May enhance dynein-mediated microtubule sliding by targeting dynein to the microtubule plus end. Required for nuclear migration during vegetative growth as well as development. Required for retrograde early endosome (EE) transport from the hyphal tip. Required for localization of dynein to the mitotic spindle poles. Recruits additional proteins to the dynein complex at SPBs. In Paracoccidioides brasiliensis (strain Pb18), this protein is Nuclear distribution protein PAC1.